The primary structure comprises 1087 residues: Period circadian protein (1087 aa).

A compositionally biased stretch (polar residues) spans 1–14; it reads MEGESTESTHNTKV. Disordered regions lie at residues 1-98 and 123-153; these read MEGE…EQTE and GAPT…QAEQ. The span at 15-46 shows a compositional bias: low complexity; it reads SDSAYSNSCSNSQSQRSGSSKSRLSGSHSSGS. The Nuclear localization signal signature appears at 65-78; that stretch reads KRNKDKSRKKKKAK. Residues 65-78 show a composition bias toward basic residues; sequence KRNKDKSRKKKKAK. Positions 79-93 are enriched in low complexity; that stretch reads SPAQATAATTTTIKS. The span at 129–140 shows a compositional bias: basic and acidic residues; that stretch reads DAHDAHGDKPQL. The span at 141–150 shows a compositional bias: acidic residues; it reads DVDEQQDDPQ. 2 PAS domains span residues 220 to 355 and 373 to 479; these read DSFC…ATPI and FAIQ…RVFQ. 4 disordered regions span residues 613–692, 736–759, 871–893, and 956–1087; these read PVTA…NPLP, MPEY…WEGD, SSAS…QPEA, and TTTQ…HGDG. Residues 655–664 show a composition bias toward polar residues; the sequence is NLTTASNVRM. Residues 665–689 are compositionally biased toward low complexity; sequence SSVTNTSNTGTGTSGGENSASGSSN. Polar residues-rich tracts occupy residues 877-892 and 1003-1024; these read QHSP…SQPE and LPST…NNPK. The segment covering 1028 to 1047 has biased composition (low complexity); sequence DSNGNSDDMDGSSFSSFYSS. Over residues 1060-1087 the composition is skewed to basic and acidic residues; it reads DNEKETKVHKLKPIVEHPEEDQTQHGDG.

In terms of assembly, forms a heterodimer with timeless (TIM); the complex then translocates into the nucleus. Post-translationally, phosphorylated with a circadian rhythmicity, probably by the double-time protein (dbt). Phosphorylation could be implicated in the stability of per monomer and in the formation of heterodimer per-tim.

The protein localises to the nucleus. The protein resides in the cytoplasm. It localises to the perinuclear region. Its function is as follows. Essential for biological clock functions. Determines the period length of circadian and ultradian rhythms; an increase in PER dosage leads to shortened circadian rhythms and a decrease leads to lengthened circadian rhythms. Essential for the circadian rhythmicity of locomotor activity, eclosion behavior, and for the rhythmic component of the male courtship song that originates in the thoracic nervous system. The biological cycle depends on the rhythmic formation and nuclear localization of the TIM-PER complex. Light induces the degradation of TIM, which promotes elimination of PER. Nuclear activity of the heterodimer coordinatively regulates PER and TIM transcription through a negative feedback loop. Behaves as a negative element in circadian transcriptional loop. Does not appear to bind DNA, suggesting indirect transcriptional inhibition. In Drosophila virilis (Fruit fly), this protein is Period circadian protein (per).